A 746-amino-acid polypeptide reads, in one-letter code: Quiannulatene synthase (746 aa).

The tract at residues 1 to 336 (MASEVIVISD…SRYPTKTELN (336 aa)) is sesterterpenoid synthase. Position 95 (Asp95) interacts with Mg(2+). The segment at 338–746 (PEVIIVDGEL…VELMLRRLWV (409 aa)) is geranylfarnesyl diphosphate synthase. Residues Lys465, Arg468, and His497 each contribute to the isopentenyl diphosphate site. Residues Asp504 and Asp508 each contribute to the Mg(2+) site. Arg513 lines the dimethylallyl diphosphate pocket. Arg514 provides a ligand contact to isopentenyl diphosphate. Dimethylallyl diphosphate contacts are provided by Lys591, Thr592, Gln628, Asn635, and Lys645.

It in the N-terminal section; belongs to the terpene synthase family. In the C-terminal section; belongs to the FPP/GGPP synthase family. Mg(2+) serves as cofactor.

It catalyses the reaction isopentenyl diphosphate + (2E,6E)-farnesyl diphosphate = (2E,6E,10E)-geranylgeranyl diphosphate + diphosphate. The catalysed reaction is (2E,6E,10E,14E)-geranylfarnesyl diphosphate = quiannulatene + diphosphate. The protein operates within secondary metabolite biosynthesis; terpenoid biosynthesis. Its function is as follows. Bifunctional sesterterpene synthase; part of the gene cluster that mediates the biosynthesis of the pentacyclic sesterterpene quiannulatic acid. The first step of the pathway is performed by the sesterterpene synthase (QS) that possesses both prenyl transferase and terpene cyclase activity, converting isopentenyl diphosphate and dimethylallyl diphosphate into geranylfarnesyl diphosphate (GFPP) and further converting GFPP into quiannulatene via an unprecedented cyclization mode which involves three rounds of hydride shifts and two successive C-C bond migrations to construct the 5-6-5-5-5 fused ring. The cytochrome P450 monooxygenase Qnn-P450 then oxidizes quiannulatene at C-19 in 3 successive reactions to afford quiannulatic acid. The sequence is that of Quiannulatene synthase from Emericella variicolor (Aspergillus stellatus).